Here is a 501-residue protein sequence, read N- to C-terminus: Lysine--tRNA ligase (501 aa).

Residues glutamate 406 and glutamate 413 each coordinate Mg(2+).

The protein belongs to the class-II aminoacyl-tRNA synthetase family. In terms of assembly, homodimer. Mg(2+) is required as a cofactor.

Its subcellular location is the cytoplasm. The enzyme catalyses tRNA(Lys) + L-lysine + ATP = L-lysyl-tRNA(Lys) + AMP + diphosphate. This is Lysine--tRNA ligase (lysS) from Halalkalibacterium halodurans (strain ATCC BAA-125 / DSM 18197 / FERM 7344 / JCM 9153 / C-125) (Bacillus halodurans).